The sequence spans 560 residues: Mitochondria-eating protein (560 aa).

Residues Met-1 to Arg-294 form an interaction with YWHAG/14-3-3 protein gamma region. A phosphoserine mark is found at Ser-13, Ser-85, Ser-156, and Ser-159. 2 coiled-coil regions span residues Asp-118–Arg-186 and Asp-223–Arg-248. Disordered regions lie at residues Gln-178–Lys-217 and Ser-243–Ser-316. Over residues Glu-181 to Asp-209 the composition is skewed to basic and acidic residues. Residues Arg-248–Arg-262 are compositionally biased toward low complexity. Residues Ser-263–Ser-293 show a composition bias toward basic residues. Over residues Thr-300–Pro-310 the composition is skewed to polar residues. Phosphoserine occurs at positions 307, 309, and 531.

It belongs to the MIEAP family. Interacts (via coiled-coil domains) with BNIP3L (via BH3 domain). Interacts (via coiled-coil domains) with BNIP3 (via BH3 domain). Interacts with YWHAG/14-3-3 protein gamma; a protein that also plays a role in MALM.

Its subcellular location is the cytoplasm. The protein localises to the cytosol. It localises to the mitochondrion outer membrane. The protein resides in the mitochondrion matrix. Key regulator of mitochondrial quality that mediates the repairing or degradation of unhealthy mitochondria in response to mitochondrial damage. Mediator of mitochondrial protein catabolic process (also named MALM) by mediating the degradation of damaged proteins inside mitochondria by promoting the accumulation in the mitochondrial matrix of hydrolases that are characteristic of the lysosomal lumen. Also involved in mitochondrion degradation of damaged mitochondria by promoting the formation of vacuole-like structures (named MIV), which engulf and degrade unhealthy mitochondria by accumulating lysosomes. The physical interaction of SPATA18/MIEAP, BNIP3 and BNIP3L/NIX at the mitochondrial outer membrane regulates the opening of a pore in the mitochondrial double membrane in order to mediate the translocation of lysosomal proteins from the cytoplasm to the mitochondrial matrix. Binds cardiolipin. May form molecular condensates (non-membrane-bounded organelles) within mitochondria that compartmentalize and promote cardiolipin metabolism. This chain is Mitochondria-eating protein (SPATA18), found in Sus scrofa (Pig).